The chain runs to 226 residues: Protein Thf1 (226 aa).

The stretch at 183-213 (EEKMQKDLDLYRSNLEKMDQLLTVIEEALQA) forms a coiled coil.

It belongs to the THF1 family.

In terms of biological role, may be involved in photosynthetic membrane biogenesis. This Gloeothece citriformis (strain PCC 7424) (Cyanothece sp. (strain PCC 7424)) protein is Protein Thf1.